Reading from the N-terminus, the 121-residue chain is NADH-quinone oxidoreductase subunit A 2 (121 aa).

3 helical membrane-spanning segments follow: residues 6–26 (FLPV…TLFV), 60–80 (VPFF…MFLF), and 89–109 (IGFV…VGFA).

The protein belongs to the complex I subunit 3 family. In terms of assembly, NDH-1 is composed of 14 different subunits. Subunits NuoA, H, J, K, L, M, N constitute the membrane sector of the complex.

It is found in the cell inner membrane. The catalysed reaction is a quinone + NADH + 5 H(+)(in) = a quinol + NAD(+) + 4 H(+)(out). Functionally, NDH-1 shuttles electrons from NADH, via FMN and iron-sulfur (Fe-S) centers, to quinones in the respiratory chain. The immediate electron acceptor for the enzyme in this species is believed to be ubiquinone. Couples the redox reaction to proton translocation (for every two electrons transferred, four hydrogen ions are translocated across the cytoplasmic membrane), and thus conserves the redox energy in a proton gradient. This is NADH-quinone oxidoreductase subunit A 2 from Rhizobium meliloti (strain 1021) (Ensifer meliloti).